We begin with the raw amino-acid sequence, 722 residues long: Inactive serine protease PAMR1 (722 aa).

The first 21 residues, 1–21 (MALLVWSSLVVASLHLLGTAA), serve as a signal peptide directing secretion. Residue Asn98 is glycosylated (N-linked (GlcNAc...) asparagine). 8 disulfides stabilise this stretch: Cys130-Cys152, Cys179-Cys201, Cys241-Cys252, Cys246-Cys262, Cys264-Cys273, Cys282-Cys331, Cys317-Cys344, and Cys416-Cys444. The region spanning 130-238 (CGEVIQAARG…DGFYVTFEEV (109 aa)) is the CUB domain. An EGF-like domain is found at 237–274 (EVTGCSSTPCFHDGTCIADKTGSYRCACLAGYTGRHCE). 2 consecutive Sushi domains span residues 280-346 (KSCK…VCIK) and 393-446 (KPAL…SCIP). The N-linked (GlcNAc...) asparagine glycan is linked to Asn318. The Peptidase S1 domain occupies 447-722 (ICGKLENFNI…FKEWLEKNMK (276 aa)). Asn455 carries an N-linked (GlcNAc...) asparagine glycan. Cysteines 491 and 507 form a disulfide. Residue Asn616 is glycosylated (N-linked (GlcNAc...) asparagine). Cystine bridges form between Cys632–Cys651 and Cys663–Cys699.

It belongs to the peptidase S1 family.

The protein resides in the secreted. In terms of biological role, may play a role in regeneration of skeletal muscle. The chain is Inactive serine protease PAMR1 (pamr1) from Xenopus tropicalis (Western clawed frog).